A 592-amino-acid chain; its full sequence is Aspartate--tRNA(Asp/Asn) ligase (592 aa).

Glu175 provides a ligand contact to L-aspartate. Residues 199 to 202 (QLFK) form an aspartate region. Arg221 contacts L-aspartate. ATP is bound by residues 221 to 223 (RDE) and Gln230. L-aspartate is bound at residue His450. Glu483 contacts ATP. Arg490 lines the L-aspartate pocket. 535–538 (GLDR) provides a ligand contact to ATP.

This sequence belongs to the class-II aminoacyl-tRNA synthetase family. Type 1 subfamily. As to quaternary structure, homodimer.

Its subcellular location is the cytoplasm. The enzyme catalyses tRNA(Asx) + L-aspartate + ATP = L-aspartyl-tRNA(Asx) + AMP + diphosphate. Aspartyl-tRNA synthetase with relaxed tRNA specificity since it is able to aspartylate not only its cognate tRNA(Asp) but also tRNA(Asn). Reaction proceeds in two steps: L-aspartate is first activated by ATP to form Asp-AMP and then transferred to the acceptor end of tRNA(Asp/Asn). This Acinetobacter baylyi (strain ATCC 33305 / BD413 / ADP1) protein is Aspartate--tRNA(Asp/Asn) ligase.